A 362-amino-acid polypeptide reads, in one-letter code: Innexin inx1 (362 aa).

Topologically, residues 1 to 28 are cytoplasmic; the sequence is MYKLLGSLKSYLKWQDIQTDNAVFRLHN. The chain crosses the membrane as a helical span at residues 29–49; sequence SFTTVLLLTCSLIITATQYVG. At 50-110 the chain is on the extracellular side; the sequence is QPISCIVNGV…DAKKYYTYYQ (61 aa). The chain crosses the membrane as a helical span at residues 111 to 131; the sequence is WVCFVLFFQAMACYTPKFLWN. Residues 132–177 lie on the Cytoplasmic side of the membrane; the sequence is KFEGGLMRMIVMGLNITICTREEKEAKRDALLDYLIKHVKRHKLYA. The chain crosses the membrane as a helical span at residues 178–198; that stretch reads IRYWACEFLCCINIIVQMYLM. Residues 199-267 are Extracellular-facing; that stretch reads NRFFDGEFLS…LPLNIVNEKT (69 aa). The helical transmembrane segment at 268-288 threads the bilayer; it reads YVFIWFWFWILLVLLIGLIVF. The Cytoplasmic segment spans residues 289–362; that stretch reads RGCIIFMPKF…VEPSKHDRAK (74 aa).

The protein belongs to the pannexin family. As to quaternary structure, heterooligomer of Inx2 and ogre. In ovary, expressed in follicle cells. Expressed around the periphery of the embryo during cellular blastoderm formation. Repeating epidermal pattern emerges from stage 11, high levels of expression detected along the borders of each segment from stage 13. At stage 13, expressed in the dorsal branch of the tracheal system. During stage 15, detected in a few cells at each of the branch points of the dorsal trunk and at low levels in cardioblasts. In embryos, also expressed in the salivary gland and the hindgut (at protein level). At stage 17, expressed in the dorsal side of the CNS. Expressed in the imaginal wing disk. Expressed in larval CNS and in tissues outside of the CNS. In pupae, expressed in the CNS and in primary, secondary and tertiary pigment cells of the retina.

It localises to the cell membrane. It is found in the cell junction. The protein localises to the gap junction. Its subcellular location is the basolateral cell membrane. In terms of biological role, structural component of the gap junctions. Essential for generation and/or maintenance of postembryonic neuroblasts and normal development of optic lobe. This is Innexin inx1 (ogre) from Drosophila melanogaster (Fruit fly).